Here is a 470-residue protein sequence, read N- to C-terminus: Nitric oxide synthase, inducible (470 aa).

L-arginine-binding residues include W2, Y3, and E7. The (6R)-L-erythro-5,6,7,8-tetrahydrobiopterin site is built by R11, W93, and F106. Y121 provides a ligand contact to heme b. The interval 145 to 165 (FKAVARAALFSSTLMSRVLAN) is calmodulin-binding. The 139-residue stretch at 169–307 (CTVLYATETG…AFSAWALTAL (139 aa)) folds into the Flavodoxin-like domain. Residues T175, E176, T177, K179, S180, S221, T222, S258, C265, E291, and Q295 each coordinate FMN. R380 provides a ligand contact to NADP(+). An FAD-binding site is contributed by H403. T440 contributes to the NADP(+) binding site.

Belongs to the NOS family. As to quaternary structure, homodimer. Requires heme b as cofactor. FAD serves as cofactor. FMN is required as a cofactor. It depends on (6R)-L-erythro-5,6,7,8-tetrahydrobiopterin as a cofactor.

The protein localises to the cytoplasm. The protein resides in the cytosol. It catalyses the reaction 2 L-arginine + 3 NADPH + 4 O2 + H(+) = 2 L-citrulline + 2 nitric oxide + 3 NADP(+) + 4 H2O. With respect to regulation, not stimulated by calcium/calmodulin. Functionally, produces nitric oxide (NO) which is a messenger molecule with diverse functions throughout the body. In macrophages, NO mediates tumoricidal and bactericidal actions. Also has nitrosylase activity and mediates cysteine S-nitrosylation of cytoplasmic target proteins such COX2. This Oncorhynchus mykiss (Rainbow trout) protein is Nitric oxide synthase, inducible (nos2).